A 50-amino-acid polypeptide reads, in one-letter code: Ampulexin 1 (50 aa).

Residues Met-1–Pro-26 form the signal peptide.

As to quaternary structure, monomer. As to expression, expressed in venom sac and, to a lesser extent, in venom gland. Not expressed in brain.

Its subcellular location is the secreted. In terms of biological role, amphipathic peptide which probably adopts an alpha-helical structure. When injected in subesophageal ganglia of cockroach P.americana, a natural host for larvae of A.compressa, dampens the escape response for about 1 hour which may contribute to early stages of hypokinesia. Has no antimicrobial activity against E.coli DH5alpha or B.thuringiensis. Is not cytotoxic in vitro. The polypeptide is Ampulexin 1 (Ampulex compressa (Emerald cockroach wasp)).